Consider the following 162-residue polypeptide: Large ribosomal subunit protein uL10 (162 aa).

Belongs to the universal ribosomal protein uL10 family. As to quaternary structure, part of the ribosomal stalk of the 50S ribosomal subunit. The N-terminus interacts with L11 and the large rRNA to form the base of the stalk. The C-terminus forms an elongated spine to which L12 dimers bind in a sequential fashion forming a multimeric L10(L12)X complex.

Functionally, forms part of the ribosomal stalk, playing a central role in the interaction of the ribosome with GTP-bound translation factors. This Borrelia duttonii (strain Ly) protein is Large ribosomal subunit protein uL10.